We begin with the raw amino-acid sequence, 150 residues long: Small ribosomal subunit protein uS7cz/uS7cy (150 aa).

Belongs to the universal ribosomal protein uS7 family. Part of the 30S ribosomal subunit.

It is found in the plastid. It localises to the chloroplast. Its function is as follows. One of the primary rRNA binding proteins, it binds directly to 16S rRNA where it nucleates assembly of the head domain of the 30S subunit. The polypeptide is Small ribosomal subunit protein uS7cz/uS7cy (rps7-A) (Adiantum capillus-veneris (Maidenhair fern)).